We begin with the raw amino-acid sequence, 175 residues long: Disulfide bond formation protein B 2 (175 aa).

At 1 to 9 the chain is on the cytoplasmic side; it reads MYLARTRFL. The chain crosses the membrane as a helical span at residues 10–26; it reads FFLASLACASIIGVAFY. The Periplasmic segment spans residues 27-44; sequence LQQAVGLDPCTLCMVQRA. Cysteines 36 and 39 form a disulfide. A helical membrane pass occupies residues 45–61; sequence AFIACGVLALCAACHAP. Over 62-68 the chain is Cytoplasmic; sequence GPTGTRR. Residues 69–85 form a helical membrane-spanning segment; sequence YSLGLLLVALAGLAGAG. At 86-142 the chain is on the periplasmic side; that stretch reads TQVWLQTASADQLIPFITRLEQILSLLSLDMCIDRLRSDALFCAEITWTLFGISLPE. Residues 143–161 form a helical membrane-spanning segment; that stretch reads WSLLAFTGLALLPLYPLFS. Over 162-175 the chain is Cytoplasmic; sequence ELSHWLATRDRGGY.

Belongs to the DsbB family.

The protein resides in the cell inner membrane. Functionally, required for disulfide bond formation in some periplasmic proteins. Acts by oxidizing the DsbA protein. This is Disulfide bond formation protein B 2 from Pseudomonas syringae pv. syringae (strain B728a).